We begin with the raw amino-acid sequence, 155 residues long: Deoxyuridine 5'-triphosphate nucleotidohydrolase (155 aa).

Residues 74–76, asparagine 87, and 91–93 contribute to the substrate site; these read RSG and TID.

This sequence belongs to the dUTPase family. Requires Mg(2+) as cofactor.

The enzyme catalyses dUTP + H2O = dUMP + diphosphate + H(+). Its pathway is pyrimidine metabolism; dUMP biosynthesis; dUMP from dCTP (dUTP route): step 2/2. Functionally, this enzyme is involved in nucleotide metabolism: it produces dUMP, the immediate precursor of thymidine nucleotides and it decreases the intracellular concentration of dUTP so that uracil cannot be incorporated into DNA. In Cereibacter sphaeroides (strain KD131 / KCTC 12085) (Rhodobacter sphaeroides), this protein is Deoxyuridine 5'-triphosphate nucleotidohydrolase.